The chain runs to 535 residues: CTP synthase (535 aa).

Positions 1–267 (MTKFIFVTGG…DDIVIKRLDL (267 aa)) are amidoligase domain. S13 serves as a coordination point for CTP. S13 provides a ligand contact to UTP. An ATP-binding site is contributed by 14 to 19 (SLGKGI). L-glutamine is bound at residue Y54. D71 serves as a coordination point for ATP. Mg(2+) contacts are provided by D71 and E141. Residues 148 to 150 (DIE), 188 to 193 (KTKPTQ), and K224 contribute to the CTP site. UTP contacts are provided by residues 188-193 (KTKPTQ) and K224. 240–242 (RDA) serves as a coordination point for ATP. Positions 293 to 535 (TIGLVGKYVS…VEAAYKHQNK (243 aa)) constitute a Glutamine amidotransferase type-1 domain. G355 is an L-glutamine binding site. The Nucleophile; for glutamine hydrolysis role is filled by C382. L-glutamine contacts are provided by residues 383 to 386 (LGMQ), E406, and R463. Residues H508 and E510 contribute to the active site.

The protein belongs to the CTP synthase family. Homotetramer.

It catalyses the reaction UTP + L-glutamine + ATP + H2O = CTP + L-glutamate + ADP + phosphate + 2 H(+). The enzyme catalyses L-glutamine + H2O = L-glutamate + NH4(+). The catalysed reaction is UTP + NH4(+) + ATP = CTP + ADP + phosphate + 2 H(+). It functions in the pathway pyrimidine metabolism; CTP biosynthesis via de novo pathway; CTP from UDP: step 2/2. Allosterically activated by GTP, when glutamine is the substrate; GTP has no effect on the reaction when ammonia is the substrate. The allosteric effector GTP functions by stabilizing the protein conformation that binds the tetrahedral intermediate(s) formed during glutamine hydrolysis. Inhibited by the product CTP, via allosteric rather than competitive inhibition. Catalyzes the ATP-dependent amination of UTP to CTP with either L-glutamine or ammonia as the source of nitrogen. Regulates intracellular CTP levels through interactions with the four ribonucleotide triphosphates. This Staphylococcus haemolyticus (strain JCSC1435) protein is CTP synthase.